Here is a 433-residue protein sequence, read N- to C-terminus: PBSX phage terminase large subunit (433 aa).

This sequence to B.subtilis YqaT and phage SPP1 terminase large subunit. In terms of assembly, dimer of a small and a large subunit.

Functionally, functions as a terminase. This chain is PBSX phage terminase large subunit (xtmB), found in Bacillus subtilis (strain 168).